We begin with the raw amino-acid sequence, 1901 residues long: A-kinase anchor protein 11 (1901 aa).

Residues S18, S422, S433, S444, and S448 each carry the phosphoserine modification. A disordered region spans residues 407 to 443; sequence ALPANVRKPTPRKPESPYGNLCDAPDSPRPVKASRED. 2 disordered regions span residues 843 to 864 and 971 to 993; these read NPGN…SSSK and LPVS…DSQN. 2 positions are modified to phosphothreonine: T981 and T1100. The segment at 1131-1153 is disordered; sequence EFAPATPPSTPHNSSVGSLSENE. A compositionally biased stretch (polar residues) spans 1141–1153; sequence PHNSSVGSLSENE. Residues S1171, S1176, S1177, S1242, and S1337 each carry the phosphoserine modification. Phosphothreonine is present on T1485. Phosphoserine is present on S1580. A PKA-RII subunit binding domain region spans residues 1650–1663; it reads LAEKIVAEAIEKAE. The tract at residues 1708 to 1805 is disordered; it reads KEIEDFQSTE…HEDEVEGLGQ (98 aa). Residues 1713–1740 show a composition bias toward polar residues; sequence FQSTESVSSQQMNLSIGDDSTGSWSNLS. A compositionally biased stretch (basic and acidic residues) spans 1747–1756; that stretch reads DESSSFHHLS. Over residues 1757–1772 the composition is skewed to low complexity; sequence ESNGNSSSWSSLGLEG. The span at 1787–1801 shows a compositional bias: acidic residues; sequence DGPDDKDEEHEDEVE.

Belongs to the AKAP110 family. Expressed in heart, brain, lung, liver, kidney, testis and ovary. Weakly expressed in skeletal muscle, pancreas and spleen.

The protein localises to the cytoplasm. It is found in the cytoskeleton. The protein resides in the microtubule organizing center. It localises to the centrosome. Binds to type II regulatory subunits of protein kinase A and anchors/targets them. In Homo sapiens (Human), this protein is A-kinase anchor protein 11 (AKAP11).